The chain runs to 254 residues: 3-dehydroquinate dehydratase (254 aa).

Residues 47-49 (EWR) and Arg83 contribute to the 3-dehydroquinate site. His144 (proton donor/acceptor) is an active-site residue. Residue Lys171 is the Schiff-base intermediate with substrate of the active site. 3-dehydroquinate-binding residues include Arg214, Ser233, and Gln237.

This sequence belongs to the type-I 3-dehydroquinase family. In terms of assembly, homodimer.

The enzyme catalyses 3-dehydroquinate = 3-dehydroshikimate + H2O. It participates in metabolic intermediate biosynthesis; chorismate biosynthesis; chorismate from D-erythrose 4-phosphate and phosphoenolpyruvate: step 3/7. Involved in the third step of the chorismate pathway, which leads to the biosynthesis of aromatic amino acids. Catalyzes the cis-dehydration of 3-dehydroquinate (DHQ) and introduces the first double bond of the aromatic ring to yield 3-dehydroshikimate. In Clostridium botulinum (strain Eklund 17B / Type B), this protein is 3-dehydroquinate dehydratase.